The sequence spans 152 residues: Protein PLANT CADMIUM RESISTANCE 2 (152 aa).

The helical transmembrane segment at 57-79 threads the bilayer; sequence TAGALYALIAVVTGCACIYSCFY.

This sequence belongs to the cornifelin family. In terms of assembly, homooligomer. Expressed in roots, leaves, shoots, stems, flowers and siliques. In leaves, restricted mainly to the vascular tissue. Expressed in all cells in the root tip, in the vascular tissue and the epidermis in the elongation zone, and only in the epidermal cells in the root hair zone.

It localises to the cell membrane. In terms of biological role, zinc transporter acting in both zinc extrusion and long-distance zinc transport. Involved in the loading of zinc into the xyleme and in the detoxification of excess zinc at the epidermal cells. Acts independently from the zinc transporters HMA2 and HMA4. May be also involved in cadmium resistance. The sequence is that of Protein PLANT CADMIUM RESISTANCE 2 (PCR2) from Arabidopsis thaliana (Mouse-ear cress).